We begin with the raw amino-acid sequence, 195 residues long: Imidazoleglycerol-phosphate dehydratase (195 aa).

It belongs to the imidazoleglycerol-phosphate dehydratase family.

The protein resides in the cytoplasm. It catalyses the reaction D-erythro-1-(imidazol-4-yl)glycerol 3-phosphate = 3-(imidazol-4-yl)-2-oxopropyl phosphate + H2O. Its pathway is amino-acid biosynthesis; L-histidine biosynthesis; L-histidine from 5-phospho-alpha-D-ribose 1-diphosphate: step 6/9. The protein is Imidazoleglycerol-phosphate dehydratase of Burkholderia pseudomallei (strain 1710b).